Consider the following 881-residue polypeptide: Ent-kaurene synthase CPS/KS, chloroplastic (881 aa).

The N-terminal 41 residues, 1–41, are a transit peptide targeting the chloroplast; the sequence is MASSTLIQNRSCGVTSSMSSFQIFRGQPLRFPGTRTPAAVQ. Residues aspartate 417, aspartate 419, aspartate 635, aspartate 639, asparagine 778, aspartate 779, and glutamate 786 each contribute to the Mg(2+) site. Residues 417-422 carry the DXDDTA motif motif; the sequence is DVDDTA. The DDXXD motif motif lies at 635–639; the sequence is DDYFD.

This sequence belongs to the terpene synthase family. It depends on Mg(2+) as a cofactor.

Its subcellular location is the plastid. It localises to the chloroplast. The enzyme catalyses (2E,6E,10E)-geranylgeranyl diphosphate = ent-copalyl diphosphate. It catalyses the reaction ent-copalyl diphosphate = ent-kaur-16-ene + diphosphate. The catalysed reaction is ent-copalyl diphosphate = ent-beyerene + diphosphate. It carries out the reaction ent-copalyl diphosphate = ent-sandaracopimara-8(14),15-diene + diphosphate. The enzyme catalyses ent-copalyl diphosphate = ent-isokaurene + diphosphate. It catalyses the reaction ent-copalyl diphosphate + H2O = 16alpha-hydroxy-ent-kaurene + diphosphate. It participates in secondary metabolite biosynthesis; terpenoid biosynthesis. Bifunctional copalyl diphosphate/kaurene synthase involved in the biosynthesis of labdane-related diterpenoids (LRDs) natural products such as ent-beyerene, an antimicrobial compound. Supports the conversion of geranylgeranyl diphosphate (GGPP) to ent-copalyl diphosphate (ent-CDP). Also catalyzes the subsequent cyclization of ent-CDP into many diterpenes, including ent-kaur-16-ene as the major product, and ent-beyerene, ent-sandaracopimaradiene, ent-kaur-15-ene (ent-isokaurene) and 16-hydroxy-ent-kaurene (ent-16-alpha-hydroxy-kaurene) as minor products. The sequence is that of Ent-kaurene synthase CPS/KS, chloroplastic from Physcomitrium patens (Spreading-leaved earth moss).